The chain runs to 386 residues: TGF-beta-activated kinase 1 and MAP3K7-binding protein 1 (386 aa).

In terms of domain architecture, PPM-type phosphatase spans 22-327 (HSCRYSKQKN…EEMTVIYVKL (306 aa)).

Interacts with mom-4; the interaction enhances mom-4 kinase activity.

Its function is as follows. Involved in the Wnt signaling pathway by regulating mom-4 kinase activity. The polypeptide is TGF-beta-activated kinase 1 and MAP3K7-binding protein 1 (Caenorhabditis elegans).